Here is a 116-residue protein sequence, read N- to C-terminus: NADH-ubiquinone oxidoreductase chain 3 (116 aa).

3 helical membrane passes run 3-23 (LITT…TISF), 56-76 (FFLI…LLPL), and 87-107 (LTLI…IYEW).

It belongs to the complex I subunit 3 family.

Its subcellular location is the mitochondrion membrane. The enzyme catalyses a ubiquinone + NADH + 5 H(+)(in) = a ubiquinol + NAD(+) + 4 H(+)(out). Core subunit of the mitochondrial membrane respiratory chain NADH dehydrogenase (Complex I) that is believed to belong to the minimal assembly required for catalysis. Complex I functions in the transfer of electrons from NADH to the respiratory chain. The immediate electron acceptor for the enzyme is believed to be ubiquinone. This Oncorhynchus gorbuscha (Pink salmon) protein is NADH-ubiquinone oxidoreductase chain 3 (MT-ND3).